A 207-amino-acid polypeptide reads, in one-letter code: Ribonuclease HII (207 aa).

One can recognise an RNase H type-2 domain in the interval 20–207; that stretch reads QLFAGVDEVG…KPVKRVLGIE (188 aa). Residues D26, E27, and D118 each coordinate a divalent metal cation.

This sequence belongs to the RNase HII family. Mn(2+) serves as cofactor. The cofactor is Mg(2+).

The protein resides in the cytoplasm. The enzyme catalyses Endonucleolytic cleavage to 5'-phosphomonoester.. Its function is as follows. Endonuclease that specifically degrades the RNA of RNA-DNA hybrids. The chain is Ribonuclease HII from Aliivibrio fischeri (strain ATCC 700601 / ES114) (Vibrio fischeri).